Reading from the N-terminus, the 421-residue chain is NADP(+)-dependent glutamate dehydrogenase (421 aa).

Residues K70 and K94 each coordinate substrate. K106 acts as the Proton donor in catalysis. Residues T190 and N221 each coordinate NADP(+). S354 is a binding site for substrate.

This sequence belongs to the Glu/Leu/Phe/Val dehydrogenases family. Homohexamer.

It catalyses the reaction L-glutamate + NADP(+) + H2O = 2-oxoglutarate + NH4(+) + NADPH + H(+). With respect to regulation, is not regulated allosterically. Activity is inhibited in the presence of high ionic strength; the inhibitory effect of KCl is slightly higher than that of NaCl. Its function is as follows. Catalyzes the reversible oxidative deamination of L-glutamate to 2-oxoglutarate and ammonia, thereby playing a key role at the intersection of the carbon and nitrogen metabolic pathways. Shows a high preference for NADP(+)/NADPH as the acceptor/donor over NAD(+)/NADH. May function in vivo in the synthetic direction. Also catalyzes at very low rates the oxidative deamination of L-2-aminobutyrate, and the reductive amination of 2-oxovalerate and 2-oxobutyrate. In Pyrobaculum calidifontis (strain DSM 21063 / JCM 11548 / VA1), this protein is NADP(+)-dependent glutamate dehydrogenase.